Here is a 158-residue protein sequence, read N- to C-terminus: Transcription elongation factor GreA (158 aa).

The protein belongs to the GreA/GreB family.

Functionally, necessary for efficient RNA polymerase transcription elongation past template-encoded arresting sites. The arresting sites in DNA have the property of trapping a certain fraction of elongating RNA polymerases that pass through, resulting in locked ternary complexes. Cleavage of the nascent transcript by cleavage factors such as GreA or GreB allows the resumption of elongation from the new 3'terminus. GreA releases sequences of 2 to 3 nucleotides. This Psychrobacter arcticus (strain DSM 17307 / VKM B-2377 / 273-4) protein is Transcription elongation factor GreA.